Reading from the N-terminus, the 165-residue chain is Austinoid biosynthesis cluster protein J (165 aa).

Belongs to the trt14 isomerase family. In terms of assembly, homodimer.

It functions in the pathway secondary metabolite biosynthesis; terpenoid biosynthesis. Part of the gene cluster that mediates the biosynthesis of calidodehydroaustin, a fungal meroterpenoid. The first step of the pathway is the synthesis of 3,5-dimethylorsellinic acid by the polyketide synthase ausA. 3,5-dimethylorsellinic acid is then prenylated by the polyprenyl transferase ausN. Further epoxidation by the FAD-dependent monooxygenase ausM and cyclization by the probable terpene cyclase ausL lead to the formation of protoaustinoid A. Protoaustinoid A is then oxidized to spiro-lactone preaustinoid A3 by the combined action of the FAD-binding monooxygenases ausB and ausC, and the dioxygenase ausE. Acid-catalyzed keto-rearrangement and ring contraction of the tetraketide portion of preaustinoid A3 by ausJ lead to the formation of preaustinoid A4. The aldo-keto reductase ausK, with the help of ausH, is involved in the next step by transforming preaustinoid A4 into isoaustinone which is in turn hydroxylated by the P450 monooxygenase ausI to form austinolide. The cytochrome P450 monooxygenase ausG modifies austinolide to austinol. Austinol is further acetylated to austin by the O-acetyltransferase ausP, which spontaneously changes to dehydroaustin. The cytochrome P450 monooxygenase ausR then converts dehydroaustin is into 7-dehydrodehydroaustin. The hydroxylation catalyzed by ausR permits the O-acetyltransferase ausQ to add an additional acetyl group to the molecule, leading to the formation of acetoxydehydroaustin. The short chain dehydrogenase ausT catalyzes the reduction of the double bond present between carbon atoms 1 and 2 to convert 7-dehydrodehydroaustin into 1,2-dihydro-7-hydroxydehydroaustin. AusQ catalyzes not only an acetylation reaction but also the addition of the PKS ausV diketide product to 1,2-dihydro-7-hydroxydehydroaustin, forming precalidodehydroaustin. Finally, the iron/alpha-ketoglutarate-dependent dioxygenase converts precalidodehydroaustin into calidodehydroaustin. The sequence is that of Austinoid biosynthesis cluster protein J from Aspergillus calidoustus.